The chain runs to 907 residues: Catenin alpha-1 (907 aa).

Residues 870-879 (VKREKLDDGQ) show a composition bias toward basic and acidic residues. A disordered region spans residues 870-895 (VKREKLDDGQTNKVKRSSQKKHINPV). The span at 882-892 (KVKRSSQKKHI) shows a compositional bias: basic residues.

Belongs to the vinculin/alpha-catenin family. In terms of assembly, interacts with ctnnb1, jupa and cdh2. Interacts with cdh1 during early stages of oogenesis, interaction is no longer present when oocyte develops into the unfertilized egg. In terms of tissue distribution, expressed in the skin (at protein level). Expressed in the ovary.

The protein resides in the cell junction. Its subcellular location is the adherens junction. It localises to the cytoplasm. It is found in the cytoskeleton. The protein localises to the cell membrane. The protein resides in the nucleus. Its function is as follows. Associates with the cytoplasmic domain of a variety of cadherins, forming catenin and cadherin complexes which are further linked to the actin filament network and is thereby involved in cell-cell adhesion. Required for embryonic development, via maintenance of adherens junctions that facilitate the maintenance of the epithelial barrier. The polypeptide is Catenin alpha-1 (Danio rerio (Zebrafish)).